A 362-amino-acid polypeptide reads, in one-letter code: 3-dehydroquinate synthase (362 aa).

NAD(+) is bound by residues 74–79, 108–112, 132–133, Lys145, Lys154, and 172–175; these read DGEGYK, GVIGD, TT, and TLDT. Positions 187, 250, and 267 each coordinate Zn(2+).

The protein belongs to the sugar phosphate cyclases superfamily. Dehydroquinate synthase family. Co(2+) serves as cofactor. Zn(2+) is required as a cofactor. Requires NAD(+) as cofactor.

Its subcellular location is the cytoplasm. The enzyme catalyses 7-phospho-2-dehydro-3-deoxy-D-arabino-heptonate = 3-dehydroquinate + phosphate. It functions in the pathway metabolic intermediate biosynthesis; chorismate biosynthesis; chorismate from D-erythrose 4-phosphate and phosphoenolpyruvate: step 2/7. Its function is as follows. Catalyzes the conversion of 3-deoxy-D-arabino-heptulosonate 7-phosphate (DAHP) to dehydroquinate (DHQ). In Citrifermentans bemidjiense (strain ATCC BAA-1014 / DSM 16622 / JCM 12645 / Bem) (Geobacter bemidjiensis), this protein is 3-dehydroquinate synthase.